A 61-amino-acid polypeptide reads, in one-letter code: Alpha-conotoxin EIIA (61 aa).

The first 16 residues, 1-16 (MFIVFLLVVLATTVGS), serve as a signal peptide directing secretion. Residues 17 to 40 (FTLDRVLEGRNAAAIDNALDQRDP) constitute a propeptide that is removed on maturation. Gln-43 is subject to Pyrrolidone carboxylic acid. Residue Pro-45 is modified to Hydroxyproline. 2 cysteine pairs are disulfide-bonded: Cys-47–Cys-53 and Cys-48–Cys-58. The residue at position 58 (Cys-58) is a Cysteine amide.

Belongs to the conotoxin A superfamily. In terms of tissue distribution, expressed by the venom duct.

It localises to the secreted. Its function is as follows. Alpha-conotoxins bind to the nicotinic acetylcholine receptors (nAChR) and inhibit them. This peptide potently blocks muscular nicotinic acetylcholine receptor (CHRNA1-CHRNB1-CHRNG-CHRND), and has no effect on neuronal receptors. It is able to totally displace [125I]-Bgtx from the Torpedo receptor with a complete inhibition in the high micromolar range. It produces a biphasic inhibition curve which fits nicely with a two-site model (Ki of 0.46 and 105 nM). This Conus ermineus (Agate cone) protein is Alpha-conotoxin EIIA.